The chain runs to 194 residues: dCTP deaminase (194 aa).

DCTP is bound by residues 110-115 (RSSLAR), Asp-128, 136-138 (VLE), Tyr-171, Lys-178, and Gln-182. The Proton donor/acceptor role is filled by Glu-138.

It belongs to the dCTP deaminase family. As to quaternary structure, homotrimer.

The enzyme catalyses dCTP + H2O + H(+) = dUTP + NH4(+). The protein operates within pyrimidine metabolism; dUMP biosynthesis; dUMP from dCTP (dUTP route): step 1/2. Its function is as follows. Catalyzes the deamination of dCTP to dUTP. The protein is dCTP deaminase of Histophilus somni (strain 2336) (Haemophilus somnus).